The sequence spans 129 residues: Small ribosomal subunit protein uS11 (129 aa).

This sequence belongs to the universal ribosomal protein uS11 family. As to quaternary structure, part of the 30S ribosomal subunit. Interacts with proteins S7 and S18. Binds to IF-3.

In terms of biological role, located on the platform of the 30S subunit, it bridges several disparate RNA helices of the 16S rRNA. Forms part of the Shine-Dalgarno cleft in the 70S ribosome. This is Small ribosomal subunit protein uS11 from Levilactobacillus brevis (strain ATCC 367 / BCRC 12310 / CIP 105137 / JCM 1170 / LMG 11437 / NCIMB 947 / NCTC 947) (Lactobacillus brevis).